A 442-amino-acid chain; its full sequence is Transcription factor MYCFIDRAFT_198930 (442 aa).

Residues 1–34 (MSTTPMAAPPGADLKPVTSSRGRSSTSDEQKLRS) form a disordered region. Positions 36-63 (CESCAQSKLKCSGDKPACARCAKRGLAC) form a DNA-binding region, zn(2)-C6 fungal-type. The disordered stretch occupies residues 74–107 (KPKGYTSTNDNNPSKRREDSHSPAASQWSSTGHL). Polar residues predominate over residues 96-107 (PAASQWSSTGHL).

It localises to the nucleus. Its function is as follows. Transcription factor that positively regulates the expression of the gene cluster that mediates the biosynthesis of an emodin derivative that may be involved in black Sigatoka disease of banana. In Pseudocercospora fijiensis (strain CIRAD86) (Black leaf streak disease fungus), this protein is Transcription factor MYCFIDRAFT_198930.